Reading from the N-terminus, the 856-residue chain is Protein phosphatase 2C 32 (856 aa).

A phosphoserine mark is found at S152, S189, and S201. The 567-residue stretch at E269–L835 folds into the PPM-type phosphatase domain. The Mn(2+) site is built by D307 and G308. Disordered stretches follow at residues P340–V373, G388–K407, and N446–S485. Positions A395–K407 are enriched in low complexity. Residues N471–S485 are compositionally biased toward polar residues. Residues D763 and D826 each coordinate Mn(2+).

The protein belongs to the PP2C family. Mg(2+) serves as cofactor. It depends on Mn(2+) as a cofactor. As to expression, expressed in roots, leaves, stems, inflorescences, flowers and throughout the shoot meristem.

It is found in the nucleus. The catalysed reaction is O-phospho-L-seryl-[protein] + H2O = L-seryl-[protein] + phosphate. The enzyme catalyses O-phospho-L-threonyl-[protein] + H2O = L-threonyl-[protein] + phosphate. Its activity is regulated as follows. Insensitive to okadaic acid. Functionally, involved in the regulation of pedicel length and of CLAVATA pathways controlling stem cell identity at shoot and flower meristems. The chain is Protein phosphatase 2C 32 (POL) from Arabidopsis thaliana (Mouse-ear cress).